The following is a 263-amino-acid chain: uncharacterized protein (263 aa).

The signal sequence occupies residues Met-1–Gly-22. Cys-23 is lipidated: N-palmitoyl cysteine. Cys-23 is lipidated: S-diacylglycerol cysteine.

This sequence belongs to the staphylococcal tandem lipoprotein family.

It is found in the cell membrane. This is an uncharacterized protein from Staphylococcus aureus (strain USA300).